A 126-amino-acid chain; its full sequence is LWamide neuropeptides (126 aa).

The propeptide at 1–2 (KR) is 1. The interval 1 to 126 (KRQQPGLWGR…KSAIPKAKPQ (126 aa)) is disordered. Trp8 carries the post-translational modification Tryptophan amide. Residues 11-15 (SADPQ) constitute a propeptide, 2. Tryptophan amide is present on residues Trp20 and Trp29. Residues 32 to 36 (SADPQ) constitute a propeptide, 2. Tryptophan amide is present on residues Trp41 and Trp50. The propeptide at 53–57 (SADPQ) is 2. Tryptophan amide is present on residues Trp62 and Trp71. The propeptide at 74–78 (SADPQ) is 2. At Trp83 the chain carries Tryptophan amide. The propeptide at 86–93 (SAGSGKRQ) is 3. Trp99 carries the tryptophan amide modification. Positions 102–126 (SAEPPQYKELEDLKQKSAIPKAKPQ) are cleaved as a propeptide — 4. Residues 107 to 116 (QYKELEDLKQ) are compositionally biased toward basic and acidic residues.

This sequence belongs to the LWamide neuropeptide family.

It localises to the secreted. Its function is as follows. Metamorphosin A may be part of an internal signaling system involved in control of metamorphosis. In Anemonia sulcata (Mediterranean snakelocks sea anemone), this protein is LWamide neuropeptides.